The primary structure comprises 977 residues: MNKNLLVFGFLIFVKIGETSKKFPLRAFVASTDIDNDTAHAIIEMLRLAEMTFNALSDVDFDVLLGTRDLPPMEMATMMWNLNRIICDEMKLGYMLMLAGTNFKNYGIYEDIANHMKMPLIDWEPSKSENIGKTTENNPMIFSVAPSAEQLLIDYIQYKGWRDVVYIHDGKNADRTLRTMFSYLHEKSPKYQLFVDNYVAPSDEEMFKEFLNEFHRRISTQHTLKSNDSSEEIDEPIPVNVIVDLEGSYRTRAFLRALEESVLVKKEYHYVFSNFDVDETDLSGFHFSLINITIFRIFDKNNKKFLKTRAEFHDVYRGGFSNTDSIPTAAAFAHDAILVAGKALQIAMNEHGKGIFDKSFVRHQLFNRGRKGLYCRPHEDQTESRQFETFEHGKKIAEAIKKVVLTDKDGTLTGRIQFDKVTGKRTNFSAEIVEIKPGVNSLNSIWERFQWAEGEGFLLGGERYVQEKKKDSSQTRKGILPSKPWQLRFNVVTVLVKPFVMLKRRNPGEPELKGNDRFEGYCIDLLNLLAKNITGFEYDVFISDGNKYGSRQADGSWDGMIGYLLNETADVAVAPLTITQERERAVDFSKPFMTTGISIMIKKPEKQEFNIFSFMEPLGMTIWIFTLSSYFGVSLTIFLVSWFSPYEKRIEFKRGEFTVTNEFTLYNSLWFTLAAFMQQGTDILPRAVSGRIASSCWWFFTLIIVSSYTANLAAFLTLERMTPPIESVEDLANQNKILYGVNEGGSTAAFFEDSIVPLYKKMWNFMVSTTQKQIELEKQSITNSTSNRIFVSSYADGIEKVRTSKGKYAFLLEETTNNYESGRRPCDTMKVGQNLNTLGYGIATKIGNPLRVSLNLAILYLSEKGELKKLENKWWYDRGQCDTGTSDGGTSSSLNLSKVAGIFYILLAGMVLSMCTALVEFLFRKNKENREKERNRMRSSRPLKPGILASCERAKQKQLQNRRTKSEEVSTPRSTLF.

The first 19 residues, 1-19 (MNKNLLVFGFLIFVKIGET), serve as a signal peptide directing secretion. Residues 20–621 (SKKFPLRAFV…FSFMEPLGMT (602 aa)) are Extracellular-facing. 6 N-linked (GlcNAc...) asparagine glycosylation sites follow: Asn-36, Asn-227, Asn-291, Asn-427, Asn-532, and Asn-566. Residues 622-642 (IWIFTLSSYFGVSLTIFLVSW) form a helical membrane-spanning segment. Over 643 to 695 (FSPYEKRIEFKRGEFTVTNEFTLYNSLWFTLAAFMQQGTDILPRAVSGRIASS) the chain is Cytoplasmic. The chain crosses the membrane as a helical span at residues 696 to 716 (CWWFFTLIIVSSYTANLAAFL). The Extracellular portion of the chain corresponds to 717–898 (TLERMTPPIE…GTSSSLNLSK (182 aa)). N-linked (GlcNAc...) asparagine glycosylation is found at Asn-783 and Asn-895. Residues 899–919 (VAGIFYILLAGMVLSMCTALV) form a helical membrane-spanning segment. Over 920–977 (EFLFRKNKENREKERNRMRSSRPLKPGILASCERAKQKQLQNRRTKSEEVSTPRSTLF) the chain is Cytoplasmic. Residues 954–977 (AKQKQLQNRRTKSEEVSTPRSTLF) form a disordered region.

The protein belongs to the glutamate-gated ion channel (TC 1.A.10.1) family. Command interneurons of the locomotory control circuit (AIA, AIB, AVA, AVD, AVE, PVC, RIA, RIG and RIR) and motor neurons (AVG, M1, RMDD and RMDV).

It localises to the membrane. Its subcellular location is the postsynaptic cell membrane. Functionally, L-glutamate acts as an excitatory neurotransmitter at many synapses in the central nervous system. The postsynaptic actions of glutamate are mediated by a variety of receptors that are named according to their selective agonists. Required for response to mechanical and osmotic stimuli. The chain is Glutamate receptor 2 (glr-2) from Caenorhabditis elegans.